A 119-amino-acid chain; its full sequence is Acidic phospholipase A2 E (119 aa).

7 disulfides stabilise this stretch: cysteine 11-cysteine 71, cysteine 26-cysteine 118, cysteine 28-cysteine 44, cysteine 43-cysteine 99, cysteine 50-cysteine 92, cysteine 60-cysteine 85, and cysteine 78-cysteine 90. Residues tyrosine 27, glycine 29, and glycine 31 each contribute to the Ca(2+) site. Residue histidine 47 is part of the active site. Ca(2+) is bound at residue aspartate 48. Aspartate 93 is a catalytic residue.

This sequence belongs to the phospholipase A2 family. Group I subfamily. D49 sub-subfamily. Ca(2+) is required as a cofactor. As to expression, expressed by the venom gland.

Its subcellular location is the secreted. It carries out the reaction a 1,2-diacyl-sn-glycero-3-phosphocholine + H2O = a 1-acyl-sn-glycero-3-phosphocholine + a fatty acid + H(+). PLA2 catalyzes the calcium-dependent hydrolysis of the 2-acyl groups in 3-sn-phosphoglycerides. This is Acidic phospholipase A2 E from Naja oxiana (Central Asian cobra).